Consider the following 535-residue polypeptide: Probable deoxycholate-binding periplasmic protein YgiS (535 aa).

Positions 1–20 are cleaved as a signal peptide; the sequence is MYTRNLLWLVSLVSAAPLYA.

This sequence belongs to the bacterial solute-binding protein 5 family.

The protein resides in the periplasm. Its function is as follows. Probably part of a deoxycholate transport system. Its expression in the presence of deoxycholate in a ygiS deletion mutant increases intracellular deoxycholate levels and decreases cell growth; higher expression in the presence of deoxycholate inhibits cell growth completely. Bile acid detergents such as deoxycholate are important for host defense against bacterial growth in the gall bladder and duodenum. This chain is Probable deoxycholate-binding periplasmic protein YgiS (ygiS), found in Escherichia coli (strain K12).